The chain runs to 230 residues: Demethylluteothin O-methyltransferase (230 aa).

The protein belongs to the methyltransferase superfamily.

It carries out the reaction demethylluteothin + S-adenosyl-L-methionine = luteothin + S-adenosyl-L-homocysteine. Its pathway is antibiotic biosynthesis. It participates in polyketide biosynthesis. Functionally, methyltransferase involved in the biosynthesis of the antibiotic aureothin, a nitroaryl polyketide metabolite with antifungal, cytotoxic and insecticidal activities. Catalyzes the methylation of demethylluteothin to luteothin (also called deoxyaureothin). Is specific for its gamma-pyrone substrate, and does not act on the alpha-pyrone isomer. This Streptomyces thioluteus protein is Demethylluteothin O-methyltransferase.